A 112-amino-acid polypeptide reads, in one-letter code: Putative pterin-4-alpha-carbinolamine dehydratase (112 aa).

Belongs to the pterin-4-alpha-carbinolamine dehydratase family.

The catalysed reaction is (4aS,6R)-4a-hydroxy-L-erythro-5,6,7,8-tetrahydrobiopterin = (6R)-L-erythro-6,7-dihydrobiopterin + H2O. The sequence is that of Putative pterin-4-alpha-carbinolamine dehydratase from Shewanella sp. (strain MR-4).